The primary structure comprises 791 residues: Pleckstrin homology domain-containing family H member 3 (791 aa).

The first 18 residues, 1-18, serve as a signal peptide directing secretion; sequence MPLPGGLWWLLCCRRGFT. A compositionally biased stretch (acidic residues) spans 29 to 41; the sequence is LSGDGDEDEDDET. Residues 29–71 are disordered; sequence LSGDGDEDEDDETFELRSPSPAGGGRGSLDVTLTQPTRNGPIT. Position 30 is a phosphoserine (Ser-30). The span at 59-71 shows a compositional bias: polar residues; sequence VTLTQPTRNGPIT. Residues 95–199 form the PH domain; sequence DVIVKGWLYR…WGVALREVIA (105 aa). One can recognise a MyTH4 domain in the interval 237-399; sequence HTSSALYAPL…PSLAEISALS (163 aa). The FERM domain maps to 404-755; it reads LLCTVHCPGA…ANPSPERPCS (352 aa). Positions 549-559 are enriched in low complexity; that stretch reads PRGPLPLLDRL. Disordered regions lie at residues 549–580 and 593–623; these read PRGP…PPPS and LAKR…GGGS. Basic residues predominate over residues 594 to 605; sequence AKRRAERARRIG. Arg-636 bears the Omega-N-methylarginine mark. The segment at 748–791 is disordered; the sequence is PSPERPCSSSGPPSQDLSDTSPPSQHQVLEKPQGQSGCLRQLQD. Polar residues predominate over residues 754–791; it reads CSSSGPPSQDLSDTSPPSQHQVLEKPQGQSGCLRQLQD.

This is Pleckstrin homology domain-containing family H member 3 (Plekhh3) from Rattus norvegicus (Rat).